We begin with the raw amino-acid sequence, 117 residues long: uncharacterized protein (117 aa).

Over residues 1–19 the composition is skewed to polar residues; it reads MTSNPSSSADQPLSGTTVP. Residues 1–28 are disordered; sequence MTSNPSSSADQPLSGTTVPGSVPGKAPE. 2 helical membrane passes run 38 to 58 and 76 to 96; these read AAVWSALIVGFLILILLLIFI and LPLGVAILLAAVGGGLITVFA.

The protein resides in the cell membrane. This is an uncharacterized protein from Mycobacterium tuberculosis (strain ATCC 25618 / H37Rv).